The following is a 152-amino-acid chain: FAD synthase (152 aa).

ATP is bound by residues 16 to 17 (TF), 21 to 24 (HPGH), D101, and Y129.

This sequence belongs to the archaeal FAD synthase family. As to quaternary structure, homodimer. The cofactor is a divalent metal cation.

The enzyme catalyses FMN + ATP + H(+) = FAD + diphosphate. It functions in the pathway cofactor biosynthesis; FAD biosynthesis; FAD from FMN: step 1/1. Its function is as follows. Catalyzes the transfer of the AMP portion of ATP to flavin mononucleotide (FMN) to produce flavin adenine dinucleotide (FAD) coenzyme. This chain is FAD synthase, found in Methanocaldococcus vulcanius (strain ATCC 700851 / DSM 12094 / M7) (Methanococcus vulcanius).